Consider the following 264-residue polypeptide: Phycocyanobilin:ferredoxin oxidoreductase (264 aa).

Belongs to the HY2 family.

The enzyme catalyses (2R,3Z)-phycocyanobilin + 4 oxidized [2Fe-2S]-[ferredoxin] = biliverdin IXalpha + 4 reduced [2Fe-2S]-[ferredoxin] + 4 H(+). Catalyzes the four-electron reduction of biliverdin IX-alpha (2-electron reduction at both the A and D rings); the reaction proceeds via an isolatable 2-electron intermediate, 181,182-dihydrobiliverdin. The protein is Phycocyanobilin:ferredoxin oxidoreductase (pcyA) of Prochlorococcus marinus (strain MIT 9313).